The following is a 179-amino-acid chain: MARLHDYYKDIVIKEMMCKFSYASVMQVPRVTKITLNMGVGEAVSDKKLLDSAMSDLAAISAQKPLVTKARKSVAGFSIRQGYPIGCKVTLRGKRMWEFLERLLSIAIPRIRDFRGLSKKSFDGRGNYNMGVSEQIIFPEINYDAIVKIFGLDISITTTAKSDDEGLALLAAFKFPFRK.

Belongs to the universal ribosomal protein uL5 family. Part of the 50S ribosomal subunit; part of the 5S rRNA/L5/L18/L25 subcomplex. Contacts the 5S rRNA and the P site tRNA. Forms a bridge to the 30S subunit in the 70S ribosome.

In terms of biological role, this is one of the proteins that bind and probably mediate the attachment of the 5S RNA into the large ribosomal subunit, where it forms part of the central protuberance. In the 70S ribosome it contacts protein S13 of the 30S subunit (bridge B1b), connecting the 2 subunits; this bridge is implicated in subunit movement. Contacts the P site tRNA; the 5S rRNA and some of its associated proteins might help stabilize positioning of ribosome-bound tRNAs. The chain is Large ribosomal subunit protein uL5 from Hamiltonella defensa subsp. Acyrthosiphon pisum (strain 5AT).